The sequence spans 395 residues: Probable nitrate/nitrite transporter NarK2 (395 aa).

12 helical membrane-spanning segments follow: residues 8 to 28 (LVLA…IGPL), 45 to 65 (LLVA…GPLT), 72 to 92 (AMLI…GVAA), 98 to 118 (ALLV…AVGI), 131 to 151 (GFST…AFFT), 157 to 177 (WFGL…TAVV), 205 to 225 (LPVT…FVAF), 244 to 266 (AGAR…GWLS), 274 to 294 (VVLA…LQPP), 301 to 321 (ATFI…FAWV), 333 to 353 (VTGI…LVMG), and 365 to 385 (VGLL…ALHA).

Belongs to the major facilitator superfamily. Nitrate/nitrite porter (TC 2.A.1.8) family.

Its subcellular location is the cell membrane. Functionally, involved in excretion of nitrite produced by the dissimilatory reduction of nitrate. The chain is Probable nitrate/nitrite transporter NarK2 (narK2) from Mycobacterium tuberculosis (strain CDC 1551 / Oshkosh).